Consider the following 156-residue polypeptide: ATP synthase subunit b (156 aa).

A helical membrane pass occupies residues 11 to 31; the sequence is AIAFVLFVLFCMKYIWPPIMA.

It belongs to the ATPase B chain family. In terms of assembly, F-type ATPases have 2 components, F(1) - the catalytic core - and F(0) - the membrane proton channel. F(1) has five subunits: alpha(3), beta(3), gamma(1), delta(1), epsilon(1). F(0) has three main subunits: a(1), b(2) and c(10-14). The alpha and beta chains form an alternating ring which encloses part of the gamma chain. F(1) is attached to F(0) by a central stalk formed by the gamma and epsilon chains, while a peripheral stalk is formed by the delta and b chains.

It is found in the cell inner membrane. In terms of biological role, f(1)F(0) ATP synthase produces ATP from ADP in the presence of a proton or sodium gradient. F-type ATPases consist of two structural domains, F(1) containing the extramembraneous catalytic core and F(0) containing the membrane proton channel, linked together by a central stalk and a peripheral stalk. During catalysis, ATP synthesis in the catalytic domain of F(1) is coupled via a rotary mechanism of the central stalk subunits to proton translocation. Functionally, component of the F(0) channel, it forms part of the peripheral stalk, linking F(1) to F(0). This chain is ATP synthase subunit b, found in Yersinia enterocolitica serotype O:8 / biotype 1B (strain NCTC 13174 / 8081).